The chain runs to 504 residues: ATP synthase subunit alpha (504 aa).

169 to 176 (GDRQTGKT) provides a ligand contact to ATP.

Belongs to the ATPase alpha/beta chains family. As to quaternary structure, F-type ATPases have 2 components, CF(1) - the catalytic core - and CF(0) - the membrane proton channel. CF(1) has five subunits: alpha(3), beta(3), gamma(1), delta(1), epsilon(1). CF(0) has three main subunits: a(1), b(2) and c(9-12). The alpha and beta chains form an alternating ring which encloses part of the gamma chain. CF(1) is attached to CF(0) by a central stalk formed by the gamma and epsilon chains, while a peripheral stalk is formed by the delta and b chains.

The protein resides in the cell membrane. It catalyses the reaction ATP + H2O + 4 H(+)(in) = ADP + phosphate + 5 H(+)(out). In terms of biological role, produces ATP from ADP in the presence of a proton gradient across the membrane. The alpha chain is a regulatory subunit. In Clostridium botulinum (strain Loch Maree / Type A3), this protein is ATP synthase subunit alpha.